Consider the following 330-residue polypeptide: Aspartate--ammonia ligase (330 aa).

It belongs to the class-II aminoacyl-tRNA synthetase family. AsnA subfamily.

Its subcellular location is the cytoplasm. It carries out the reaction L-aspartate + NH4(+) + ATP = L-asparagine + AMP + diphosphate + H(+). It functions in the pathway amino-acid biosynthesis; L-asparagine biosynthesis; L-asparagine from L-aspartate (ammonia route): step 1/1. The polypeptide is Aspartate--ammonia ligase (Cronobacter sakazakii (strain ATCC BAA-894) (Enterobacter sakazakii)).